Here is a 555-residue protein sequence, read N- to C-terminus: Polypyrimidine tract-binding protein 1 (555 aa).

N-acetylmethionine is present on Met1. Ser16 carries the phosphoserine modification. RRM domains lie at Arg58–Asn142, Leu183–Leu259, and Ser361–Gln412. Residue Lys64 forms a Glycyl lysine isopeptide (Lys-Gly) (interchain with G-Cter in SUMO2) linkage. Tyr126 carries the phosphotyrosine modification. Phosphothreonine is present on Thr137. Position 140 is a phosphoserine (Ser140). Residue Lys217 forms a Glycyl lysine isopeptide (Lys-Gly) (interchain with G-Cter in SUMO2) linkage. The segment at His435–Ser457 is disordered. Ser457 is subject to Phosphoserine. Residues Ala478–Ser553 enclose the RRM 4 domain.

As to quaternary structure, monomer. Part of a ternary complex containing KHSRP, PTBP1, PTBP2 and HNRPH1. Interacts with SFPQ. Interacts with RAVER1. Interacts with IVNS1ABP (via BACK domain); the interaction is direct. Expressed in myoblast; expression gradually decreases during muscle cell differentiation (at protein level).

The protein resides in the nucleus. Its function is as follows. Plays a role in pre-mRNA splicing and in the regulation of alternative splicing events. Activates exon skipping of its own pre-mRNA during muscle cell differentiation. Binds to the polypyrimidine tract of introns. May promote RNA looping when bound to two separate polypyrimidine tracts in the same pre-mRNA. May promote the binding of U2 snRNP to pre-mRNA. Cooperates with RAVER1 to modulate switching between mutually exclusive exons during maturation of the TPM1 pre-mRNA. Represses the splicing of MAPT/Tau exon 10. Binds to polypyrimidine-rich controlling element (PCE) of CFTR and promotes exon skipping of CFTR exon 9, thereby antagonizing TIA1 and its role in exon inclusion of CFTR exon 9. Plays a role in the splicing of pyruvate kinase PKM by binding repressively to a polypyrimidine tract flanking PKM exon 9, inhibiting exon 9 inclusion and resulting in exon 10 inclusion and production of the PKM M2 isoform. The protein is Polypyrimidine tract-binding protein 1 (Ptbp1) of Mus musculus (Mouse).